A 362-amino-acid polypeptide reads, in one-letter code: MHVMRLSIHRLRRFQTVELHPASALNLLTGDNGAGKTSVLEALHLMAYGRSFRGRVRDGLIQQGANDLEVFVEWKEGGSAAGERTRRAGLRHSGQEWTGRLDGEDVAQLGSLCAALAVVTFEPGSHVLISGGGEPRRRFLDWGLFHVEPDFLALWRRYVRALKQRNALLKQGAQPRMLDAWDHELAESGETLTSRRMRYLERLQDRLIPVADVIAPSLGLSALTFAPGWKRHEVSLADALLLARDRDRQNGYTSQGPHRADWMPHFDVLPGKDALSRGQAKLTALACLLAQAEDFAFERSEWPVIALDDLGSELDRHHQARVLHRLVSAPAQMLITGTEIPPGLADAGALLHRFHVEHGQVD.

30–37 (GDNGAGKT) provides a ligand contact to ATP.

The protein belongs to the RecF family.

The protein localises to the cytoplasm. Its function is as follows. The RecF protein is involved in DNA metabolism; it is required for DNA replication and normal SOS inducibility. RecF binds preferentially to single-stranded, linear DNA. It also seems to bind ATP. The chain is DNA replication and repair protein RecF from Xanthomonas oryzae pv. oryzae (strain MAFF 311018).